A 950-amino-acid polypeptide reads, in one-letter code: Leucine--tRNA ligase (950 aa).

Residues proline 41–histidine 52 carry the 'HIGH' region motif. Residues lysine 718–serine 722 carry the 'KMSKS' region motif. An ATP-binding site is contributed by lysine 721.

The protein belongs to the class-I aminoacyl-tRNA synthetase family.

It is found in the cytoplasm. It carries out the reaction tRNA(Leu) + L-leucine + ATP = L-leucyl-tRNA(Leu) + AMP + diphosphate. The chain is Leucine--tRNA ligase from Rhodopirellula baltica (strain DSM 10527 / NCIMB 13988 / SH1).